The primary structure comprises 518 residues: Alpha-ionylideneethane synthase abl3 (518 aa).

2 disordered regions span residues 294 to 355 and 440 to 466; these read AAPG…SVFE and KAPPPPSPRRAVPADGEADSAAGQRSK. The segment covering 299 to 339 has biased composition (low complexity); it reads TSSDNSSDNRSSSISSTSSTGTDGSGAGDASSVHSSGVHSD.

The protein belongs to the alpha-ionylideneethane synthase family.

The protein operates within hormone biosynthesis. Functionally, alpha-ionylideneethane synthase involved in the biosynthesis of abscisic acid (ABA), a phytohormone that acts antagonistically toward salicylic acid (SA), jasmonic acid (JA) and ethylene (ETH) signaling, to impede plant defense responses. During pathogen-host interaction, ABA plays a dual role in disease severity by increasing plant susceptibility and accelerating pathogenesis in the fungus itself. The first step of the pathway catalyzes the reaction from farnesyl diphosphate to alpha-ionylideneethane performed by the alpha-ionylideneethane synthase ABA3 via a three-step reaction mechanism involving 2 neutral intermediates, beta-farnesene and allofarnesene. The cytochrome P450 monooxygenase ABA1 might then be involved in the conversion of alpha-ionylideneethane to alpha-ionylideneacetic acid. Alpha-ionylideneacetic acid is further converted to abscisic acid in 2 steps involving the cytochrome P450 monooxygenase ABA2 and the short-chain dehydrogenase/reductase ABA4, via the intermediates 1'-deoxy-ABA or 1',4'-trans-diol-ABA, depending on the order of action of these 2 enzymes. ABA2 is responsible for the hydroxylation of carbon atom C-1' and ABA4 might be involved in the oxidation of the C-4' carbon atom. The sequence is that of Alpha-ionylideneethane synthase abl3 from Pyricularia oryzae (strain Y34) (Rice blast fungus).